The sequence spans 401 residues: Argininosuccinate synthase (401 aa).

ATP is bound at residue 10–18 (AYSGGVDTS). An L-citrulline-binding site is contributed by Y89. G119 contacts ATP. L-aspartate contacts are provided by T121, N125, and D126. Position 125 (N125) interacts with L-citrulline. L-citrulline-binding residues include R129, S177, S186, E262, and Y274.

It belongs to the argininosuccinate synthase family. Type 1 subfamily. In terms of assembly, homotetramer.

The protein localises to the cytoplasm. It catalyses the reaction L-citrulline + L-aspartate + ATP = 2-(N(omega)-L-arginino)succinate + AMP + diphosphate + H(+). Its pathway is amino-acid biosynthesis; L-arginine biosynthesis; L-arginine from L-ornithine and carbamoyl phosphate: step 2/3. The sequence is that of Argininosuccinate synthase from Thermosynechococcus vestitus (strain NIES-2133 / IAM M-273 / BP-1).